Reading from the N-terminus, the 571-residue chain is Carboxylesterase 3B (571 aa).

The N-terminal stretch at 1-31 (MTNMRTMIPAGSSVLVWVTCLLLAFVTTVTG) is a signal peptide. Cys100 and Cys127 are joined by a disulfide. Ser232 (acyl-ester intermediate) is an active-site residue. Cys284 and Cys295 are oxidised to a cystine. Asn311 is a glycosylation site (N-linked (GlcNAc...) asparagine). Active-site charge relay system residues include Glu347 and His460. Positions 568-571 (PEEL) match the Prevents secretion from ER motif.

The protein belongs to the type-B carboxylesterase/lipase family.

Its subcellular location is the endoplasmic reticulum lumen. It carries out the reaction a carboxylic ester + H2O = an alcohol + a carboxylate + H(+). Involved in the detoxification of xenobiotics and in the activation of ester and amide prodrugs. The sequence is that of Carboxylesterase 3B (Ces3b) from Mus musculus (Mouse).